Here is a 62-residue protein sequence, read N- to C-terminus: Photosystem II reaction center protein Z (62 aa).

The next 2 membrane-spanning stretches (helical) occupy residues 8-28 (LVLL…VVLA) and 41-61 (YTGA…NSLV).

The protein belongs to the PsbZ family. In terms of assembly, PSII is composed of 1 copy each of membrane proteins PsbA, PsbB, PsbC, PsbD, PsbE, PsbF, PsbH, PsbI, PsbJ, PsbK, PsbL, PsbM, PsbT, PsbX, PsbY, PsbZ, Psb30/Ycf12, at least 3 peripheral proteins of the oxygen-evolving complex and a large number of cofactors. It forms dimeric complexes.

It localises to the plastid. Its subcellular location is the chloroplast thylakoid membrane. May control the interaction of photosystem II (PSII) cores with the light-harvesting antenna, regulates electron flow through the 2 photosystem reaction centers. PSII is a light-driven water plastoquinone oxidoreductase, using light energy to abstract electrons from H(2)O, generating a proton gradient subsequently used for ATP formation. This Porphyra purpurea (Red seaweed) protein is Photosystem II reaction center protein Z.